A 94-amino-acid polypeptide reads, in one-letter code: Ferredoxin-like protein (94 aa).

4Fe-4S ferredoxin-type domains follow at residues 20 to 52 (PHIRIKDPDHCTELSEKQCTVCCPAGCYTRETN) and 53 to 83 (GKVTLVTDGCLECGTCRIICQDSGNLEWEWP).

This sequence to ferredoxins from P.putida and C.tartarivorum, ferredoxin I from A.vinelandii, ferredoxin II from D.desulfuricans.

Its function is as follows. Could be a 3Fe-4S cluster-containing protein. This is Ferredoxin-like protein (fixX) from Azotobacter vinelandii.